Reading from the N-terminus, the 366-residue chain is Palmitoyltransferase ZDHHC2 (366 aa).

Residues 1 to 15 (MAPSGSGGVRRRCRR) lie on the Cytoplasmic side of the membrane. A helical membrane pass occupies residues 16-36 (VLYWIPVVFISLLLGWSYYAY). Residues 37 to 47 (AIQLCIVSMEN) lie on the Lumenal side of the membrane. Residues 48–68 (IGEQVVCLMAYHLLFAMFVWS) traverse the membrane as a helical segment. The Cytoplasmic portion of the chain corresponds to 69–169 (YWKTIFTLPM…NNCVGFSNYK (101 aa)). The region spanning 126–176 (RYCDRCQLIKPDRCHHCSVCDKCILKMDHHCPWVNNCVGFSNYKFFLLFLA) is the DHHC domain. Catalysis depends on cysteine 156, which acts as the S-palmitoyl cysteine intermediate. The helical transmembrane segment at 170–190 (FFLLFLAYSLLYCLFIAATDL) threads the bilayer. Over 191-207 (QYFIRFWTNGLPDTQAK) the chain is Lumenal. A helical transmembrane segment spans residues 208–228 (FHIMFLFFAAAMFSVSLSSLF). Residues 229 to 366 (GYHCWLVSKN…NPALTMENET (138 aa)) are Cytoplasmic-facing. A compositionally biased stretch (polar residues) spans 297 to 316 (VNQDPEQPSTPAGLNSTVKN). Residues 297-366 (VNQDPEQPST…NPALTMENET (70 aa)) are disordered. The tract at residues 298–366 (NQDPEQPSTP…NPALTMENET (69 aa)) is mediates localization to plasma membrane and recycling endosomes. The span at 326–336 (PLRESQSHLLK) shows a compositional bias: basic and acidic residues. The Non-canonical dileucine endocytic signal signature appears at 334–335 (LL). The segment covering 337–347 (DSQTWTESSAN) has biased composition (polar residues). An NPxY-like endocytic signal motif is present at residues 357 to 360 (NPAL).

This sequence belongs to the DHHC palmitoyltransferase family. In terms of assembly, monomer. Homodimer. The monomeric form has a higher catalytic activity. Autopalmitoylated. Expressed in all brain regions.

It is found in the postsynaptic density. It localises to the postsynaptic recycling endosome membrane. The protein localises to the cell membrane. The protein resides in the endoplasmic reticulum membrane. Its subcellular location is the golgi apparatus membrane. The enzyme catalyses L-cysteinyl-[protein] + hexadecanoyl-CoA = S-hexadecanoyl-L-cysteinyl-[protein] + CoA. It catalyses the reaction L-cysteinyl-[protein] + tetradecanoyl-CoA = S-tetradecanoyl-L-cysteinyl-[protein] + CoA. The catalysed reaction is L-cysteinyl-[protein] + octadecanoyl-CoA = S-octadecanoyl-L-cysteinyl-[protein] + CoA. Functionally, palmitoyltransferase that catalyzes the addition of palmitate onto various protein substrates and is involved in a variety of cellular processes. Has no stringent fatty acid selectivity and in addition to palmitate can also transfer onto target proteins myristate from tetradecanoyl-CoA and stearate from octadecanoyl-CoA. In the nervous system, plays a role in long term synaptic potentiation by palmitoylating AKAP5 through which it regulates protein trafficking from the dendritic recycling endosomes to the plasma membrane and controls both structural and functional plasticity at excitatory synapses. In dendrites, mediates the palmitoylation of DLG4 when synaptic activity decreases and induces synaptic clustering of DLG4 and associated AMPA-type glutamate receptors. Also mediates the de novo and turnover palmitoylation of RGS7BP, a shuttle for Gi/o-specific GTPase-activating proteins/GAPs, promoting its localization to the plasma membrane in response to the activation of G protein-coupled receptors. Through the localization of these GTPase-activating proteins/GAPs, it also probably plays a role in G protein-coupled receptors signaling in neurons. Also probably plays a role in cell adhesion by palmitoylating CD9 and CD151 to regulate their expression and function. Palmitoylates the endoplasmic reticulum protein CKAP4 and regulates its localization to the plasma membrane. Could also palmitoylate LCK and regulate its localization to the plasma membrane. The sequence is that of Palmitoyltransferase ZDHHC2 from Mus musculus (Mouse).